The chain runs to 356 residues: Histidinol-phosphate aminotransferase (356 aa).

K214 carries the N6-(pyridoxal phosphate)lysine modification.

Belongs to the class-II pyridoxal-phosphate-dependent aminotransferase family. Histidinol-phosphate aminotransferase subfamily. Homodimer. Pyridoxal 5'-phosphate serves as cofactor.

It carries out the reaction L-histidinol phosphate + 2-oxoglutarate = 3-(imidazol-4-yl)-2-oxopropyl phosphate + L-glutamate. Its pathway is amino-acid biosynthesis; L-histidine biosynthesis; L-histidine from 5-phospho-alpha-D-ribose 1-diphosphate: step 7/9. The sequence is that of Histidinol-phosphate aminotransferase from Shigella sonnei (strain Ss046).